A 101-amino-acid polypeptide reads, in one-letter code: Large ribosomal subunit protein eL31 (101 aa).

The protein belongs to the eukaryotic ribosomal protein eL31 family.

The chain is Large ribosomal subunit protein eL31 from Ignicoccus hospitalis (strain KIN4/I / DSM 18386 / JCM 14125).